The following is a 448-amino-acid chain: tRNA-2-methylthio-N(6)-dimethylallyladenosine synthase (448 aa).

An MTTase N-terminal domain is found at 7-123 (RSFYIHTFGC…LPALIGDAEE (117 aa)). [4Fe-4S] cluster contacts are provided by C16, C52, C86, C159, C163, and C166. The Radical SAM core domain maps to 145–375 (REVGVGAFVP…IDLQLSISAE (231 aa)). The region spanning 378 to 441 (QEAVGSVVDV…SATLTGVNQG (64 aa)) is the TRAM domain.

This sequence belongs to the methylthiotransferase family. MiaB subfamily. In terms of assembly, monomer. [4Fe-4S] cluster serves as cofactor.

Its subcellular location is the cytoplasm. The enzyme catalyses N(6)-dimethylallyladenosine(37) in tRNA + (sulfur carrier)-SH + AH2 + 2 S-adenosyl-L-methionine = 2-methylsulfanyl-N(6)-dimethylallyladenosine(37) in tRNA + (sulfur carrier)-H + 5'-deoxyadenosine + L-methionine + A + S-adenosyl-L-homocysteine + 2 H(+). Catalyzes the methylthiolation of N6-(dimethylallyl)adenosine (i(6)A), leading to the formation of 2-methylthio-N6-(dimethylallyl)adenosine (ms(2)i(6)A) at position 37 in tRNAs that read codons beginning with uridine. This is tRNA-2-methylthio-N(6)-dimethylallyladenosine synthase from Chlorobium phaeovibrioides (strain DSM 265 / 1930) (Prosthecochloris vibrioformis (strain DSM 265)).